We begin with the raw amino-acid sequence, 105 residues long: uncharacterized protein (105 aa).

The interval 1-27 is disordered; it reads MSLKSWHPQSKTKRVGASEGNPQWGSG.

This is an uncharacterized protein from Homo sapiens (Human).